Consider the following 53-residue polypeptide: MESHHKWGIAFIAAGLALEILFPVLLVFDTILIVVGIALILFGGREKKIEGVS.

The helical transmembrane segment at 20-42 threads the bilayer; it reads ILFPVLLVFDTILIVVGIALILF.

The protein resides in the membrane. This is an uncharacterized protein from Archaeoglobus fulgidus (strain ATCC 49558 / DSM 4304 / JCM 9628 / NBRC 100126 / VC-16).